The sequence spans 417 residues: Lipoyl synthase, mitochondrial (417 aa).

The N-terminal 30 residues, methionine 1–phenylalanine 30, are a transit peptide targeting the mitochondrion. Residues serine 23–glycine 62 are disordered. 2 stretches are compositionally biased toward polar residues: residues phenylalanine 30–valine 41 and proline 51–alanine 61. [4Fe-4S] cluster is bound by residues cysteine 132, cysteine 137, cysteine 143, cysteine 163, cysteine 167, cysteine 170, and serine 378. The Radical SAM core domain maps to glycine 146–leucine 367.

The protein belongs to the radical SAM superfamily. Lipoyl synthase family. The cofactor is [4Fe-4S] cluster.

The protein localises to the mitochondrion. It carries out the reaction [[Fe-S] cluster scaffold protein carrying a second [4Fe-4S](2+) cluster] + N(6)-octanoyl-L-lysyl-[protein] + 2 oxidized [2Fe-2S]-[ferredoxin] + 2 S-adenosyl-L-methionine + 4 H(+) = [[Fe-S] cluster scaffold protein] + N(6)-[(R)-dihydrolipoyl]-L-lysyl-[protein] + 4 Fe(3+) + 2 hydrogen sulfide + 2 5'-deoxyadenosine + 2 L-methionine + 2 reduced [2Fe-2S]-[ferredoxin]. It functions in the pathway protein modification; protein lipoylation via endogenous pathway; protein N(6)-(lipoyl)lysine from octanoyl-[acyl-carrier-protein]: step 2/2. Functionally, catalyzes the radical-mediated insertion of two sulfur atoms into the C-6 and C-8 positions of the octanoyl moiety bound to the lipoyl domains of lipoate-dependent enzymes, thereby converting the octanoylated domains into lipoylated derivatives. The sequence is that of Lipoyl synthase, mitochondrial from Pyrenophora tritici-repentis (strain Pt-1C-BFP) (Wheat tan spot fungus).